A 277-amino-acid polypeptide reads, in one-letter code: Undecaprenyl-diphosphatase (277 aa).

The next 6 helical transmembrane spans lie at 44–64 (RAMA…VWEF), 86–106 (GNLL…ADLI), 110–130 (LFNP…MLWA), 184–204 (AATE…AVYS), 215–235 (GDLP…MIAV), and 250–270 (FAWY…FGWV).

This sequence belongs to the UppP family.

The protein localises to the cell inner membrane. The catalysed reaction is di-trans,octa-cis-undecaprenyl diphosphate + H2O = di-trans,octa-cis-undecaprenyl phosphate + phosphate + H(+). Functionally, catalyzes the dephosphorylation of undecaprenyl diphosphate (UPP). Confers resistance to bacitracin. In Pseudomonas putida (strain ATCC 47054 / DSM 6125 / CFBP 8728 / NCIMB 11950 / KT2440), this protein is Undecaprenyl-diphosphatase.